The sequence spans 360 residues: Alanine racemase (360 aa).

The active-site Proton acceptor; specific for D-alanine is the Lys-34. Lys-34 carries the N6-(pyridoxal phosphate)lysine modification. Residue Arg-129 coordinates substrate. Tyr-254 (proton acceptor; specific for L-alanine) is an active-site residue. Met-302 provides a ligand contact to substrate.

The protein belongs to the alanine racemase family. The cofactor is pyridoxal 5'-phosphate.

It catalyses the reaction L-alanine = D-alanine. It functions in the pathway amino-acid biosynthesis; D-alanine biosynthesis; D-alanine from L-alanine: step 1/1. Its function is as follows. Catalyzes the interconversion of L-alanine and D-alanine. May also act on other amino acids. The protein is Alanine racemase (alr) of Pectobacterium atrosepticum (strain SCRI 1043 / ATCC BAA-672) (Erwinia carotovora subsp. atroseptica).